The following is a 428-amino-acid chain: 3-phosphoshikimate 1-carboxyvinyltransferase (428 aa).

3-phosphoshikimate contacts are provided by K22, S23, and R27. Residue K22 coordinates phosphoenolpyruvate. Residues G96 and R124 each coordinate phosphoenolpyruvate. 3-phosphoshikimate-binding residues include S169, S170, Q171, S197, D313, N336, and K340. Q171 contributes to the phosphoenolpyruvate binding site. Residue D313 is the Proton acceptor of the active site. 3 residues coordinate phosphoenolpyruvate: R344, R386, and K411.

This sequence belongs to the EPSP synthase family. As to quaternary structure, monomer.

The protein resides in the cytoplasm. The catalysed reaction is 3-phosphoshikimate + phosphoenolpyruvate = 5-O-(1-carboxyvinyl)-3-phosphoshikimate + phosphate. It functions in the pathway metabolic intermediate biosynthesis; chorismate biosynthesis; chorismate from D-erythrose 4-phosphate and phosphoenolpyruvate: step 6/7. Catalyzes the transfer of the enolpyruvyl moiety of phosphoenolpyruvate (PEP) to the 5-hydroxyl of shikimate-3-phosphate (S3P) to produce enolpyruvyl shikimate-3-phosphate and inorganic phosphate. In Xenorhabdus nematophila (strain ATCC 19061 / DSM 3370 / CCUG 14189 / LMG 1036 / NCIMB 9965 / AN6), this protein is 3-phosphoshikimate 1-carboxyvinyltransferase.